The chain runs to 735 residues: Peroxisomal multifunctional enzyme type 2 (735 aa).

The segment at 1–305 is (3R)-hydroxyacyl-CoA dehydrogenase; that stretch reads MASPLRFDGR…IEVLHKIDSE (305 aa). NAD(+)-binding positions include 16-40, Leu-21, and Asp-40; that span reads GAGGGLGRAYALAFAERGALVVVND. Lys-46 bears the N6-acetyllysine; alternate mark. Lys-46 bears the N6-succinyllysine; alternate mark. Phosphoserine is present on Ser-52. Residues Lys-57 and Lys-68 each carry the N6-succinyllysine modification. An NAD(+)-binding site is contributed by 75-76; that stretch reads SV. Lys-84 carries the N6-succinyllysine modification. Asn-99 contributes to the NAD(+) binding site. Ser-151 serves as a coordination point for substrate. Catalysis depends on Tyr-164, which acts as the Proton acceptor. NAD(+) contacts are provided by residues 164–168 and 196–199; these read YSAAK and AGSR. Thr-265 carries the post-translational modification Phosphothreonine. Lys-275 bears the N6-succinyllysine mark. Phosphoserine is present on residues Ser-304 and Ser-308. Residues 321–621 are enoyl-CoA hydratase 2; it reads SGFAGVVGHK…AQTPSEGGAL (301 aa). Lys-355 bears the N6-succinyllysine mark. Position 405-406 (405-406) interacts with (3R)-3-hydroxydecanoyl-CoA; that stretch reads HG. Lys-423 carries the N6-succinyllysine modification. (3R)-3-hydroxydecanoyl-CoA is bound by residues Lys-434, 509 to 514, Gly-532, and Phe-562; that span reads DSNPLH. The MaoC-like domain occupies 483 to 599; the sequence is VPSRPPDAVL…QETGDIVISN (117 aa). An N6-acetyllysine modification is found at Lys-564. An N6-succinyllysine mark is found at Lys-578 and Lys-662. The 113-residue stretch at 623–735 folds into the SCP2 domain; that stretch reads SALVFGEIGR…QMILKDYAKL (113 aa). Lys-668 carries the post-translational modification N6-acetyllysine. Gln-705 and Gln-723 together coordinate substrate. At Lys-724 the chain carries N6-succinyllysine. A Microbody targeting signal motif is present at residues 733-735; sequence AKL.

It belongs to the short-chain dehydrogenases/reductases (SDR) family. In terms of assembly, homodimer.

It localises to the peroxisome. It carries out the reaction a (3R)-3-hydroxyacyl-CoA + NAD(+) = a 3-oxoacyl-CoA + NADH + H(+). It catalyses the reaction (24R,25R)-3alpha,7alpha,12alpha,24-tetrahydroxy-5beta-cholestan-26-oyl-CoA = (24E)-3alpha,7alpha,12alpha-trihydroxy-5beta-cholest-24-en-26-oyl-CoA + H2O. The enzyme catalyses a (3R)-3-hydroxyacyl-CoA = a (2E)-enoyl-CoA + H2O. The catalysed reaction is (2E)-octenoyl-CoA + H2O = (3R)-hydroxyoctanoyl-CoA. It carries out the reaction (3R)-hydroxyoctanoyl-CoA + NAD(+) = 3-oxooctanoyl-CoA + NADH + H(+). It catalyses the reaction (3R)-hydroxyhexadecanoyl-CoA + NAD(+) = 3-oxohexadecanoyl-CoA + NADH + H(+). The enzyme catalyses (2E)-hexadecenedioyl-CoA + H2O = (3R)-hydroxyhexadecanedioyl-CoA. The catalysed reaction is (3R)-hydroxyhexadecanedioyl-CoA + NAD(+) = 3-oxohexadecanedioyl-CoA + NADH + H(+). It carries out the reaction (3R)-hydroxyhexadecanoyl-CoA = (2E)-hexadecenoyl-CoA + H2O. It catalyses the reaction (3R)-3-hydroxydecanoyl-CoA = (2E)-decenoyl-CoA + H2O. The enzyme catalyses (3R)-3-hydroxydecanoyl-CoA + NAD(+) = 3-oxodecanoyl-CoA + NADH + H(+). The catalysed reaction is (24R,25R)-3alpha,7alpha,12alpha,24-tetrahydroxy-5beta-cholestan-26-oyl-CoA + NAD(+) = 3alpha,7alpha,12alpha-trihydroxy-24-oxo-5beta-cholestan-26-oyl-CoA + NADH + H(+). Its pathway is lipid metabolism; fatty acid beta-oxidation. Its function is as follows. Bifunctional enzyme acting on the peroxisomal fatty acid beta-oxidation pathway. Catalyzes two of the four reactions in fatty acid degradation: hydration of 2-enoyl-CoA (trans-2-enoyl-CoA) to produce (3R)-3-hydroxyacyl-CoA, and dehydrogenation of (3R)-3-hydroxyacyl-CoA to produce 3-ketoacyl-CoA (3-oxoacyl-CoA), which is further metabolized by SCPx. Can use straight-chain and branched-chain fatty acids, as well as bile acid intermediates as substrates. This chain is Peroxisomal multifunctional enzyme type 2, found in Rattus norvegicus (Rat).